A 419-amino-acid chain; its full sequence is Acyl-coenzyme A thioesterase 6 (419 aa).

Catalysis depends on charge relay system residues serine 232, aspartate 324, and histidine 358. The short motif at 417-419 (SKL) is the Peroxisome targeting signal element.

The protein belongs to the C/M/P thioester hydrolase family. Highly expressed in white adipose tissue. Detected at lower levels in kidney, liver, brown adipose tissue and brain.

The protein resides in the peroxisome. The enzyme catalyses pristanoyl-CoA + H2O = 2,6,10,14-tetramethylpentadecanoate + CoA + H(+). It carries out the reaction phytanoyl-CoA + H2O = 3,7,11,15-tetramethylhexadecanoate + CoA + H(+). It functions in the pathway lipid metabolism; fatty acid metabolism. Its function is as follows. Catalyzes the hydrolysis of acyl-CoAs into free fatty acids and coenzyme A (CoASH), regulating their respective intracellular levels. Catalyzes the hydrolysis of phytanoyl-CoA and pristanoyl-CoA, two methyl-branched fatty acids derived from phytol, that enter the body via the diet. The sequence is that of Acyl-coenzyme A thioesterase 6 from Mus musculus (Mouse).